The sequence spans 274 residues: Serine/threonine-protein kinase 1 (274 aa).

Positions 16-273 (AVLAPKVVNG…HSFLASRHDY (258 aa)) constitute a Protein kinase domain. Residues 22–30 (VVNGRFGKM) and lysine 46 contribute to the ATP site. Aspartate 134 serves as the catalytic Proton acceptor.

Belongs to the protein kinase superfamily. Ser/Thr protein kinase family.

It carries out the reaction L-seryl-[protein] + ATP = O-phospho-L-seryl-[protein] + ADP + H(+). The catalysed reaction is L-threonyl-[protein] + ATP = O-phospho-L-threonyl-[protein] + ADP + H(+). The sequence is that of Serine/threonine-protein kinase 1 (PK1) from Orgyia pseudotsugata multicapsid polyhedrosis virus (OpMNPV).